A 225-amino-acid chain; its full sequence is Small ribosomal subunit protein uS3 (225 aa).

One can recognise a KH type-2 domain in the interval 38–106 (LRGHLRKKLS…DVALNIVEIR (69 aa)).

This sequence belongs to the universal ribosomal protein uS3 family. Part of the 30S ribosomal subunit. Forms a tight complex with proteins S10 and S14.

In terms of biological role, binds the lower part of the 30S subunit head. Binds mRNA in the 70S ribosome, positioning it for translation. This Granulibacter bethesdensis (strain ATCC BAA-1260 / CGDNIH1) protein is Small ribosomal subunit protein uS3.